Consider the following 204-residue polypeptide: NAD(P)H dehydrogenase (quinone) (204 aa).

The Flavodoxin-like domain maps to 3-194 (VLIVFYSMYG…AGARYQGRHV (192 aa)). FMN contacts are provided by residues 9 to 14 (SMYGHI) and 82 to 84 (TRF). NAD(+) is bound at residue Y11. Substrate is bound at residue W102. H138 is an FMN binding site.

It belongs to the WrbA family. The cofactor is FMN.

It catalyses the reaction a quinone + NADH + H(+) = a quinol + NAD(+). The catalysed reaction is a quinone + NADPH + H(+) = a quinol + NADP(+). This Syntrophobacter fumaroxidans (strain DSM 10017 / MPOB) protein is NAD(P)H dehydrogenase (quinone).